Here is a 275-residue protein sequence, read N- to C-terminus: MSQQLQQIIDTAWENRAELSPKAAPADVREAVAHAIEQLDKGLLRVAEKKDGDWVVNQWLKKAVLLSFRLEDNAPMPAGGYSQFYDKVPSKFASYTAEDFAAGGFRVVPPAIARRGSFIAKNVVLMPSYTNIGAYVDEGTMVDTWATVGSCAQIGKNVHLSGGVGIGGVLEPLQANPVIIEDNCFIGARSEVVEGVIVEENSVISMGVYLGQSTKIYDRETGEVTYGRIPAGSVVVAGNLPSKDGTHSLYCAVIVKKVDARTRAKVGLNELLRGD.

2 residues coordinate substrate: Arg-106 and Asp-143.

This sequence belongs to the transferase hexapeptide repeat family. In terms of assembly, homotrimer.

Its subcellular location is the cytoplasm. It catalyses the reaction (S)-2,3,4,5-tetrahydrodipicolinate + succinyl-CoA + H2O = (S)-2-succinylamino-6-oxoheptanedioate + CoA. Its pathway is amino-acid biosynthesis; L-lysine biosynthesis via DAP pathway; LL-2,6-diaminopimelate from (S)-tetrahydrodipicolinate (succinylase route): step 1/3. The protein is 2,3,4,5-tetrahydropyridine-2,6-dicarboxylate N-succinyltransferase of Paraburkholderia xenovorans (strain LB400).